Consider the following 161-residue polypeptide: Ribonuclease P protein component (161 aa).

A disordered region spans residues methionine 1–lysine 20.

This sequence belongs to the RnpA family. Consists of a catalytic RNA component (M1 or rnpB) and a protein subunit.

It catalyses the reaction Endonucleolytic cleavage of RNA, removing 5'-extranucleotides from tRNA precursor.. Functionally, RNaseP catalyzes the removal of the 5'-leader sequence from pre-tRNA to produce the mature 5'-terminus. It can also cleave other RNA substrates such as 4.5S RNA. The protein component plays an auxiliary but essential role in vivo by binding to the 5'-leader sequence and broadening the substrate specificity of the ribozyme. This chain is Ribonuclease P protein component, found in Helicobacter pylori (strain P12).